A 389-amino-acid chain; its full sequence is Lipid-A-disaccharide synthase (389 aa).

This sequence belongs to the LpxB family.

The enzyme catalyses a lipid X + a UDP-2-N,3-O-bis[(3R)-3-hydroxyacyl]-alpha-D-glucosamine = a lipid A disaccharide + UDP + H(+). It functions in the pathway bacterial outer membrane biogenesis; LPS lipid A biosynthesis. Its function is as follows. Condensation of UDP-2,3-diacylglucosamine and 2,3-diacylglucosamine-1-phosphate to form lipid A disaccharide, a precursor of lipid A, a phosphorylated glycolipid that anchors the lipopolysaccharide to the outer membrane of the cell. This is Lipid-A-disaccharide synthase from Paraburkholderia xenovorans (strain LB400).